The sequence spans 492 residues: Catalase isozyme 1 (492 aa).

Active-site residues include His-65 and Asn-138. Tyr-348 provides a ligand contact to heme.

This sequence belongs to the catalase family. As to quaternary structure, homotetramer. Heme serves as cofactor.

The protein resides in the cytoplasm. The protein localises to the cytosol. Its subcellular location is the peroxisome matrix. The catalysed reaction is 2 H2O2 = O2 + 2 H2O. With respect to regulation, inhibited by salicylic acid. Catalyzes the degradation of hydrogen peroxide (H(2)O(2)) generated by peroxisomal oxidases to water and oxygen, thereby protecting cells from the toxic effects of hydrogen peroxide. This Nicotiana tabacum (Common tobacco) protein is Catalase isozyme 1 (CAT-1).